The chain runs to 399 residues: uncharacterized protein (399 aa).

9 helical membrane-spanning segments follow: residues 46–66 (IAPY…FFIV), 76–95 (TLPR…YQTM), 139–159 (GVGY…FWMA), 181–201 (IIII…FWTF), 226–246 (LMLN…TCFF), 262–282 (ILPA…SFIW), 303–323 (VQFS…LAHM), 330–350 (IIQA…INYF), and 352–372 (GTII…SFVH).

The protein belongs to the CDP-alcohol phosphatidyltransferase class-I family.

Its subcellular location is the membrane. This is an uncharacterized protein from Dictyostelium discoideum (Social amoeba).